A 428-amino-acid polypeptide reads, in one-letter code: MQSLMLQPISYINGTINLPGSKSVSNRALLLAAFAKGATCLTNLLDSDDIRHMLNALAALGISYRLSDDRTCCEVDGIGGLITHQGPIELFLGNAGTAMRPLTAALCLGKNDVVLTGEPRMKERPIGHLVDALRQGGAEIDYLEQENYPPLHVKGGFVGGKVMVDGRVSSQFLTALLMAAPLAENDSEIHIQGELVSKPYIDITLALMKSFGITINHDQYQIFHIKGRQQYVSPGHYLVEGDASSASYFLAAAAIKGGTVRVTGIGKNSLQGDTKFANVLEKMGAKIRWGDDFVECERGTLTGIDMDMNEIPDAAMTIATTALFAAGETVIRNIYNWRVKETDRLHAMATELRKVGAEVEEGVDYIRITPPPRLLPAEIGTYNDHRMAMCFSLVALSDTPVTILDPGCTAKTFPDYFNQLERLSQRKS.

Lysine 22, serine 23, and arginine 27 together coordinate 3-phosphoshikimate. Position 22 (lysine 22) interacts with phosphoenolpyruvate. 2 residues coordinate phosphoenolpyruvate: glycine 96 and arginine 124. Positions 169, 170, 171, 197, 313, 336, and 340 each coordinate 3-phosphoshikimate. Glutamine 171 contacts phosphoenolpyruvate. Aspartate 313 functions as the Proton acceptor in the catalytic mechanism. Residues arginine 344, arginine 386, and lysine 411 each coordinate phosphoenolpyruvate.

Belongs to the EPSP synthase family. In terms of assembly, monomer.

The protein localises to the cytoplasm. It carries out the reaction 3-phosphoshikimate + phosphoenolpyruvate = 5-O-(1-carboxyvinyl)-3-phosphoshikimate + phosphate. The protein operates within metabolic intermediate biosynthesis; chorismate biosynthesis; chorismate from D-erythrose 4-phosphate and phosphoenolpyruvate: step 6/7. Catalyzes the transfer of the enolpyruvyl moiety of phosphoenolpyruvate (PEP) to the 5-hydroxyl of shikimate-3-phosphate (S3P) to produce enolpyruvyl shikimate-3-phosphate and inorganic phosphate. This Photorhabdus laumondii subsp. laumondii (strain DSM 15139 / CIP 105565 / TT01) (Photorhabdus luminescens subsp. laumondii) protein is 3-phosphoshikimate 1-carboxyvinyltransferase.